A 226-amino-acid polypeptide reads, in one-letter code: Enolase-phosphatase E1 (226 aa).

It belongs to the HAD-like hydrolase superfamily. MasA/MtnC family. As to quaternary structure, monomer. The cofactor is Mg(2+).

It catalyses the reaction 5-methylsulfanyl-2,3-dioxopentyl phosphate + H2O = 1,2-dihydroxy-5-(methylsulfanyl)pent-1-en-3-one + phosphate. It participates in amino-acid biosynthesis; L-methionine biosynthesis via salvage pathway; L-methionine from S-methyl-5-thio-alpha-D-ribose 1-phosphate: step 3/6. Its pathway is amino-acid biosynthesis; L-methionine biosynthesis via salvage pathway; L-methionine from S-methyl-5-thio-alpha-D-ribose 1-phosphate: step 4/6. Bifunctional enzyme that catalyzes the enolization of 2,3-diketo-5-methylthiopentyl-1-phosphate (DK-MTP-1-P) into the intermediate 2-hydroxy-3-keto-5-methylthiopentenyl-1-phosphate (HK-MTPenyl-1-P), which is then dephosphorylated to form the acireductone 1,2-dihydroxy-3-keto-5-methylthiopentene (DHK-MTPene). This chain is Enolase-phosphatase E1, found in Shewanella sp. (strain W3-18-1).